A 257-amino-acid polypeptide reads, in one-letter code: Type III pantothenate kinase (257 aa).

5-12 (DIGNTNIK) is an ATP binding site. Residue 107–110 (GSDR) participates in substrate binding. Catalysis depends on Asp-109, which acts as the Proton acceptor. Position 133 (Thr-133) interacts with ATP.

The protein belongs to the type III pantothenate kinase family. Homodimer. It depends on NH4(+) as a cofactor. The cofactor is K(+).

The protein resides in the cytoplasm. The enzyme catalyses (R)-pantothenate + ATP = (R)-4'-phosphopantothenate + ADP + H(+). Its pathway is cofactor biosynthesis; coenzyme A biosynthesis; CoA from (R)-pantothenate: step 1/5. Functionally, catalyzes the phosphorylation of pantothenate (Pan), the first step in CoA biosynthesis. This Ehrlichia ruminantium (strain Gardel) protein is Type III pantothenate kinase.